Here is a 316-residue protein sequence, read N- to C-terminus: Deoxyribonuclease-1-like 1 (316 aa).

An N-terminal signal peptide occupies residues 1 to 28 (MHSSGGFQKAIHGHALLLLLLLASGAET). Active-site residues include Glu107 and His158. The cysteines at positions 197 and 234 are disulfide-linked. The N-linked (GlcNAc...) asparagine glycan is linked to Asn271.

It belongs to the DNase I family.

Its subcellular location is the endoplasmic reticulum. The protein is Deoxyribonuclease-1-like 1 (DNASE1L1) of Bos taurus (Bovine).